Reading from the N-terminus, the 395-residue chain is uncharacterized protein (395 aa).

The protein belongs to the UDP-glycosyltransferase family.

This is an uncharacterized protein from Bacillus subtilis (strain 168).